The chain runs to 350 residues: 3-isopropylmalate dehydrogenase (350 aa).

Residue 76–87 (GPKWDNAPKRPE) coordinates NAD(+). The substrate site is built by arginine 94, arginine 104, arginine 132, and aspartate 217. Mg(2+) is bound by residues aspartate 217, aspartate 241, and aspartate 245. Residue 275–287 (GSAPDIANQNIAN) coordinates NAD(+).

This sequence belongs to the isocitrate and isopropylmalate dehydrogenases family. LeuB type 1 subfamily. In terms of assembly, homodimer. Mg(2+) is required as a cofactor. Mn(2+) serves as cofactor.

Its subcellular location is the cytoplasm. It catalyses the reaction (2R,3S)-3-isopropylmalate + NAD(+) = 4-methyl-2-oxopentanoate + CO2 + NADH. Its pathway is amino-acid biosynthesis; L-leucine biosynthesis; L-leucine from 3-methyl-2-oxobutanoate: step 3/4. Functionally, catalyzes the oxidation of 3-carboxy-2-hydroxy-4-methylpentanoate (3-isopropylmalate) to 3-carboxy-4-methyl-2-oxopentanoate. The product decarboxylates to 4-methyl-2 oxopentanoate. This is 3-isopropylmalate dehydrogenase from Listeria monocytogenes serovar 1/2a (strain ATCC BAA-679 / EGD-e).